A 229-amino-acid polypeptide reads, in one-letter code: Potassium/proton antiporter CemA (229 aa).

The next 3 membrane-spanning stretches (helical) occupy residues 6–26 (AFIP…ISLC), 107–127 (ILHF…SFWG), and 189–209 (ILSG…KYWI).

The protein belongs to the CemA family.

The protein resides in the plastid. It localises to the chloroplast inner membrane. It catalyses the reaction K(+)(in) + H(+)(out) = K(+)(out) + H(+)(in). Functionally, contributes to K(+)/H(+) antiport activity by supporting proton efflux to control proton extrusion and homeostasis in chloroplasts in a light-dependent manner to modulate photosynthesis. Prevents excessive induction of non-photochemical quenching (NPQ) under continuous-light conditions. Indirectly promotes efficient inorganic carbon uptake into chloroplasts. This Draba nemorosa (Woodland whitlowgrass) protein is Potassium/proton antiporter CemA.